We begin with the raw amino-acid sequence, 262 residues long: MNILVTNDDGVHAPGIVALAEALRLVGTVTVVAPDRERSAVGHALTLHHPLRVTEIMAGIFAVDGTPTDCVNLGIHTLLAEAPDIVVSGVNRGGNLGDDITYSGTVSAALEATLMGIPAIAVSLATNGHGSNYRAAAAFAAQLAREVLDRGLPRDTFLNVNVPDLPAEELGGPVITSQGKRDYGGDIVTKVDPRGRNYYWIGGNEPVFRDIEGTDFHAVKRGRISVTPLHLDLTNYASLSILQSWDLSACRPEAGQPSGALL.

4 residues coordinate a divalent metal cation: D8, D9, S39, and N91.

Belongs to the SurE nucleotidase family. It depends on a divalent metal cation as a cofactor.

It localises to the cytoplasm. It carries out the reaction a ribonucleoside 5'-phosphate + H2O = a ribonucleoside + phosphate. Nucleotidase that shows phosphatase activity on nucleoside 5'-monophosphates. This chain is 5'-nucleotidase SurE, found in Geobacter sulfurreducens (strain ATCC 51573 / DSM 12127 / PCA).